We begin with the raw amino-acid sequence, 295 residues long: Ankyrin repeat and SOCS box protein 17 (295 aa).

The stretch at 146 to 176 is one ANK repeat; that stretch reads SGITPLLYVAQTRQSNILKILLQYGILEREK. Residues 243 to 295 form the SOCS box domain; that stretch reads DYIPPTRYKDPCELVHLCRITIRTQLLANNMLPNGIFSLLIPTRLQNFLNLES.

It belongs to the ankyrin SOCS box (ASB) family. Specifically expressed in testis. Localizes to spermatogenic cells in testis, with highest expression in round spermatids and condensing spermatids and lower expression in pachytene spermatocytes.

Its pathway is protein modification; protein ubiquitination. Its function is as follows. May be a substrate-recognition component of a SCF-like ECS (Elongin-Cullin-SOCS-box protein) E3 ubiquitin-protein ligase complex which mediates the ubiquitination and subsequent proteasomal degradation of target proteins. The protein is Ankyrin repeat and SOCS box protein 17 (Asb17) of Mus musculus (Mouse).